We begin with the raw amino-acid sequence, 170 residues long: Flavin reductase (170 aa).

NAD(+) contacts are provided by residues Ser51, His138, and 159 to 162; that span reads FYRG.

Belongs to the non-flavoprotein flavin reductase family. In terms of assembly, homodimer. Likely forms a loose transient complex with monooxygenases for which it provides FMNH(2).

It carries out the reaction FMNH2 + NAD(+) = FMN + NADH + 2 H(+). It catalyses the reaction FADH2 + NAD(+) = FAD + NADH + 2 H(+). In terms of biological role, catalyzes the reduction of FMN, and to a lesser extent, FAD, using NADH as an electron donor. Is able to provide the FMNH(2) required for the Baeyer-Villiger oxidations catalyzed by 2,5-diketocamphane monooxygenases and 3,6-diketocamphane monooxygenase. NADPH acts as a very poor cosubstrate. The sequence is that of Flavin reductase from Pseudomonas putida (Arthrobacter siderocapsulatus).